Here is a 318-residue protein sequence, read N- to C-terminus: Taste receptor type 2 member 60 (318 aa).

At 1-7 (MNGDHMV) the chain is on the extracellular side. A helical transmembrane segment spans residues 8-28 (LGSSVTDKKAIILVTILLLLR). At 29–40 (LVAIAGNGFIIA) the chain is on the cytoplasmic side. Residues 41–61 (ALGVEWVLRRMLLPCDXLLVS) form a helical membrane-spanning segment. The Extracellular segment spans residues 62–88 (LGASRFCLQSVVMGKTIYVFLHPMAFP). A helical membrane pass occupies residues 89–109 (YNPVLQFLAFQWDFLNAATLW). Over 110-128 (FSTWLSVFYCVKIAAFTHP) the chain is Cytoplasmic. Residues 129-149 (VFLWLKHKLSGWLPWILFSSV) traverse the membrane as a helical segment. The Extracellular portion of the chain corresponds to 150–183 (GLSSFTTILFFIGNHRMYQNYLRNHLQPWNITGN). Asparagine 179 carries N-linked (GlcNAc...) asparagine glycosylation. The helical transmembrane segment at 184-204 (SIRSYCEKFYLFPLKMITWTM) threads the bilayer. Residues 205–234 (PTAVFFICMILLITSLGRHMKKALLTTSGF) are Cytoplasmic-facing. The helical transmembrane segment at 235–255 (REPSMQAHIKALLALLSFAML) threads the bilayer. Over 256 to 264 (FISYFLSLV) the chain is Extracellular. The helical transmembrane segment at 265 to 285 (FSAAGIFPPLDFKFWVWESVI) threads the bilayer. Residues 286–318 (YLCAAVHPIILLFSNCRLRAVLKSCRSSRCGTP) are Cytoplasmic-facing.

It belongs to the G-protein coupled receptor T2R family.

The protein resides in the membrane. Functionally, receptor that may play a role in the perception of bitterness and is gustducin-linked. May play a role in sensing the chemical composition of the gastrointestinal content. The activity of this receptor may stimulate alpha gustducin, mediate PLC-beta-2 activation and lead to the gating of TRPM5. This chain is Taste receptor type 2 member 60 (TAS2R60), found in Gorilla gorilla gorilla (Western lowland gorilla).